The sequence spans 300 residues: Tyrosine recombinase XerC (300 aa).

Residues 2-88 (ENVNFTLNLF…SLRSFYKFLL (87 aa)) enclose the Core-binding (CB) domain. The Tyr recombinase domain occupies 109-294 (KIPHFLYPDE…TKDHLRYVYL (186 aa)). Active-site residues include R149, K173, H246, R249, and H272. Y281 acts as the O-(3'-phospho-DNA)-tyrosine intermediate in catalysis.

It belongs to the 'phage' integrase family. XerC subfamily. Forms a cyclic heterotetrameric complex composed of two molecules of XerC and two molecules of XerD.

The protein localises to the cytoplasm. Its function is as follows. Site-specific tyrosine recombinase, which acts by catalyzing the cutting and rejoining of the recombining DNA molecules. The XerC-XerD complex is essential to convert dimers of the bacterial chromosome into monomers to permit their segregation at cell division. It also contributes to the segregational stability of plasmids. The chain is Tyrosine recombinase XerC from Anoxybacillus flavithermus (strain DSM 21510 / WK1).